We begin with the raw amino-acid sequence, 390 residues long: MSQSIIESKNKKDVNNGKIPAKETILSPRFYTTDFEAMENMDLSINEEELEAICEEFRKDYNRHHFVRNSEFDGAAEKLDPETRELFVDFLEGSCTSEFSGFLLYKELSRRIKDKNPLLAECFAHMARDEARHAGFLNKSMSDFGLQLDLGFLTANKDYTYFPPRSIFYATYLSEKIGYWRYIAIYRHLEKNPDSKIFPLFNYFENWCQDENRHGDFFDALMKAQPRTVKSLSQKINIGGTTFTHPLFDYFHRFRYFLNNLPITSKLWSRFFLLAVFATMYARDLGIKKDFYSSLGLDAREYDQYVINKTNETSARVFPVVLDVYDKSFYGRLDKIVENNKVLSNIANSEENKVSKTLKKLPTYLSNGYQLLRLYLLKPLDSKDFQPSIR.

The protein belongs to the AcsF family. The cofactor is Fe cation.

The enzyme catalyses Mg-protoporphyrin IX 13-monomethyl ester + 3 NADPH + 3 O2 + 2 H(+) = 3,8-divinyl protochlorophyllide a + 3 NADP(+) + 5 H2O. The protein operates within porphyrin-containing compound metabolism; chlorophyll biosynthesis (light-independent). Functionally, catalyzes the formation of the isocyclic ring in chlorophyll biosynthesis. Mediates the cyclase reaction, which results in the formation of divinylprotochlorophyllide (Pchlide) characteristic of all chlorophylls from magnesium-protoporphyrin IX 13-monomethyl ester (MgPMME). The chain is Magnesium-protoporphyrin IX monomethyl ester [oxidative] cyclase from Prochlorococcus marinus (strain MIT 9312).